The primary structure comprises 943 residues: UvrABC system protein A (943 aa).

32-39 (GLSGSGKS) contacts ATP. A C4-type zinc finger spans residues 251–278 (CPVCGFTVPELEPRLFSFNAPFGSCSEC). 2 consecutive ABC transporter domains span residues 308–589 (WNPI…SKSI) and 609–937 (GNGR…HYLK). ATP is bound at residue 641–648 (GVSGSGKS). The C4-type zinc-finger motif lies at 740–766 (CEACSGDGIIKIEMHFLPDVYVACEVC).

The protein belongs to the ABC transporter superfamily. UvrA family. As to quaternary structure, forms a heterotetramer with UvrB during the search for lesions.

Its subcellular location is the cytoplasm. In terms of biological role, the UvrABC repair system catalyzes the recognition and processing of DNA lesions. UvrA is an ATPase and a DNA-binding protein. A damage recognition complex composed of 2 UvrA and 2 UvrB subunits scans DNA for abnormalities. When the presence of a lesion has been verified by UvrB, the UvrA molecules dissociate. This is UvrABC system protein A from Streptococcus pneumoniae serotype 4 (strain ATCC BAA-334 / TIGR4).